Here is an 83-residue protein sequence, read N- to C-terminus: Hainantoxin-III 9 (83 aa).

Residues 1–21 form the signal peptide; sequence MKASMFLALAGLALLFVVCYA. The propeptide occupies 22 to 48; the sequence is SESEEKEFPIELLSKIFAVDVFKGEER. 3 cysteine pairs are disulfide-bonded: Cys50–Cys65, Cys57–Cys70, and Cys64–Cys77. The residue at position 81 (Leu81) is a Leucine amide.

The protein belongs to the neurotoxin 10 (Hwtx-1) family. 15 (Hntx-3) subfamily. Monomer. As to expression, expressed by the venom gland.

The protein localises to the secreted. In terms of biological role, selective antagonist of neuronal tetrodotoxin (TTX)-sensitive voltage-gated sodium channels (IC(50)=1270 nM on Nav1.1/SCN1A, 270 nM on Nav1.2/SCN2A, 491 nM on Nav1.3/SCN3A and 232 nM on Nav1.7/SCN9A). This toxin suppress Nav1.7 current amplitude without significantly altering the activation, inactivation, and repriming kinetics. Short extreme depolarizations partially activate the toxin-bound channel, indicating voltage-dependent inhibition of this toxin. This toxin increases the deactivation of the Nav1.7 current after extreme depolarizations. The toxin-Nav1.7 complex is gradually dissociated upon prolonged strong depolarizations in a voltage-dependent manner, and the unbound toxin rebinds to Nav1.7 after a long repolarization. Moreover, analysis of chimeric channels showed that the DIIS3-S4 linker is critical for toxin binding to Nav1.7. These data are consistent with this toxin interacting with Nav1.7 site 4 and trapping the domain II voltage sensor in the closed state. The sequence is that of Hainantoxin-III 9 from Cyriopagopus hainanus (Chinese bird spider).